The sequence spans 333 residues: UDP-N-acetylenolpyruvoylglucosamine reductase (333 aa).

Residues 12–176 enclose the FAD-binding PCMH-type domain; sequence LPAQCRALIE…TSVVFRLPKD (165 aa). R153 is an active-site residue. S221 acts as the Proton donor in catalysis. E317 is a catalytic residue.

It belongs to the MurB family. FAD serves as cofactor.

The protein localises to the cytoplasm. The enzyme catalyses UDP-N-acetyl-alpha-D-muramate + NADP(+) = UDP-N-acetyl-3-O-(1-carboxyvinyl)-alpha-D-glucosamine + NADPH + H(+). It functions in the pathway cell wall biogenesis; peptidoglycan biosynthesis. Its function is as follows. Cell wall formation. This chain is UDP-N-acetylenolpyruvoylglucosamine reductase, found in Idiomarina loihiensis (strain ATCC BAA-735 / DSM 15497 / L2-TR).